Reading from the N-terminus, the 301-residue chain is Diaminopimelate epimerase (301 aa).

Substrate contacts are provided by Asn15, Gln47, and Asn67. Cys76 functions as the Proton donor in the catalytic mechanism. Substrate-binding positions include 77-78 (GN), Asn163, Asn197, and 215-216 (ER). Catalysis depends on Cys224, which acts as the Proton acceptor. 225–226 (GS) provides a ligand contact to substrate. The interval 280-301 (SGSLDPSTGLWSRDGTQEAGAR) is disordered.

Belongs to the diaminopimelate epimerase family. Homodimer.

The protein localises to the cytoplasm. It carries out the reaction (2S,6S)-2,6-diaminopimelate = meso-2,6-diaminopimelate. It participates in amino-acid biosynthesis; L-lysine biosynthesis via DAP pathway; DL-2,6-diaminopimelate from LL-2,6-diaminopimelate: step 1/1. In terms of biological role, catalyzes the stereoinversion of LL-2,6-diaminopimelate (L,L-DAP) to meso-diaminopimelate (meso-DAP), a precursor of L-lysine and an essential component of the bacterial peptidoglycan. This is Diaminopimelate epimerase from Rhizobium leguminosarum bv. trifolii (strain WSM2304).